A 474-amino-acid polypeptide reads, in one-letter code: UDP-glycosyltransferase 71E1 (474 aa).

UDP-alpha-D-glucose is bound by residues Ser275, 341–342, 359–367, and 381–384; these read WA, HCGWNSTLE, and YAEQ.

This sequence belongs to the UDP-glycosyltransferase family.

Its function is as follows. May glycosylate diterpenes or flavonols in leaves. The chain is UDP-glycosyltransferase 71E1 from Stevia rebaudiana (Stevia).